A 186-amino-acid chain; its full sequence is uncharacterized protein (186 aa).

The next 3 membrane-spanning stretches (helical) occupy residues 42–62, 80–100, and 131–151; these read ISIA…LSVL, LLFL…IGLV, and ICGI…FIVL.

It to U.parvum UU008, UU041 and UU042.

It is found in the cell membrane. This is an uncharacterized protein from Ureaplasma parvum serovar 3 (strain ATCC 700970).